Reading from the N-terminus, the 119-residue chain is Ribonuclease P protein component (119 aa).

The protein belongs to the RnpA family. As to quaternary structure, consists of a catalytic RNA component (M1 or rnpB) and a protein subunit.

It catalyses the reaction Endonucleolytic cleavage of RNA, removing 5'-extranucleotides from tRNA precursor.. Its function is as follows. RNaseP catalyzes the removal of the 5'-leader sequence from pre-tRNA to produce the mature 5'-terminus. It can also cleave other RNA substrates such as 4.5S RNA. The protein component plays an auxiliary but essential role in vivo by binding to the 5'-leader sequence and broadening the substrate specificity of the ribozyme. This is Ribonuclease P protein component from Yersinia enterocolitica serotype O:8 / biotype 1B (strain NCTC 13174 / 8081).